Consider the following 277-residue polypeptide: Urease accessory protein UreD (277 aa).

Belongs to the UreD family. As to quaternary structure, ureD, UreF and UreG form a complex that acts as a GTP-hydrolysis-dependent molecular chaperone, activating the urease apoprotein by helping to assemble the nickel containing metallocenter of UreC. The UreE protein probably delivers the nickel.

It is found in the cytoplasm. Required for maturation of urease via the functional incorporation of the urease nickel metallocenter. The protein is Urease accessory protein UreD of Pseudomonas putida (strain W619).